The following is a 305-amino-acid chain: UDP-3-O-acyl-N-acetylglucosamine deacetylase (305 aa).

Positions 78, 237, and 241 each coordinate Zn(2+). The active-site Proton donor is H264.

This sequence belongs to the LpxC family. Zn(2+) serves as cofactor.

The enzyme catalyses a UDP-3-O-[(3R)-3-hydroxyacyl]-N-acetyl-alpha-D-glucosamine + H2O = a UDP-3-O-[(3R)-3-hydroxyacyl]-alpha-D-glucosamine + acetate. Its pathway is glycolipid biosynthesis; lipid IV(A) biosynthesis; lipid IV(A) from (3R)-3-hydroxytetradecanoyl-[acyl-carrier-protein] and UDP-N-acetyl-alpha-D-glucosamine: step 2/6. In terms of biological role, catalyzes the hydrolysis of UDP-3-O-myristoyl-N-acetylglucosamine to form UDP-3-O-myristoylglucosamine and acetate, the committed step in lipid A biosynthesis. The sequence is that of UDP-3-O-acyl-N-acetylglucosamine deacetylase from Cupriavidus necator (strain ATCC 17699 / DSM 428 / KCTC 22496 / NCIMB 10442 / H16 / Stanier 337) (Ralstonia eutropha).